The chain runs to 371 residues: N-acetyldiaminopimelate deacetylase (371 aa).

The active site involves aspartate 68. The Proton acceptor role is filled by glutamate 127.

This sequence belongs to the peptidase M20A family. N-acetyldiaminopimelate deacetylase subfamily.

The catalysed reaction is N-acetyl-(2S,6S)-2,6-diaminopimelate + H2O = (2S,6S)-2,6-diaminopimelate + acetate. Its pathway is amino-acid biosynthesis; L-lysine biosynthesis via DAP pathway; LL-2,6-diaminopimelate from (S)-tetrahydrodipicolinate (acetylase route): step 3/3. Functionally, catalyzes the conversion of N-acetyl-diaminopimelate to diaminopimelate and acetate. The sequence is that of N-acetyldiaminopimelate deacetylase from Listeria monocytogenes serotype 4b (strain CLIP80459).